The following is a 406-amino-acid chain: Cysteine--tRNA ligase (406 aa).

Zn(2+) is bound at residue C16. Residues 18–28 (PTVYSDVHIGN) carry the 'HIGH' region motif. Zn(2+) contacts are provided by C192, H218, and E222. The 'KMSKS' region signature appears at 250–254 (KMAKS). ATP is bound at residue K253.

This sequence belongs to the class-I aminoacyl-tRNA synthetase family. As to quaternary structure, monomer. Requires Zn(2+) as cofactor.

It is found in the cytoplasm. The enzyme catalyses tRNA(Cys) + L-cysteine + ATP = L-cysteinyl-tRNA(Cys) + AMP + diphosphate. The polypeptide is Cysteine--tRNA ligase (Mesomycoplasma hyopneumoniae (strain J / ATCC 25934 / NCTC 10110) (Mycoplasma hyopneumoniae)).